Reading from the N-terminus, the 170-residue chain is ATP synthase subunit b (170 aa).

Residues 5-25 (YFIPCLLLPTMMLASGGGGET) form a helical membrane-spanning segment.

This sequence belongs to the ATPase B chain family. As to quaternary structure, F-type ATPases have 2 components, F(1) - the catalytic core - and F(0) - the membrane proton channel. F(1) has five subunits: alpha(3), beta(3), gamma(1), delta(1), epsilon(1). F(0) has three main subunits: a(1), b(2) and c(10-14). The alpha and beta chains form an alternating ring which encloses part of the gamma chain. F(1) is attached to F(0) by a central stalk formed by the gamma and epsilon chains, while a peripheral stalk is formed by the delta and b chains.

Its subcellular location is the cell inner membrane. In terms of biological role, f(1)F(0) ATP synthase produces ATP from ADP in the presence of a proton or sodium gradient. F-type ATPases consist of two structural domains, F(1) containing the extramembraneous catalytic core and F(0) containing the membrane proton channel, linked together by a central stalk and a peripheral stalk. During catalysis, ATP synthesis in the catalytic domain of F(1) is coupled via a rotary mechanism of the central stalk subunits to proton translocation. Component of the F(0) channel, it forms part of the peripheral stalk, linking F(1) to F(0). The protein is ATP synthase subunit b of Wolinella succinogenes (strain ATCC 29543 / DSM 1740 / CCUG 13145 / JCM 31913 / LMG 7466 / NCTC 11488 / FDC 602W) (Vibrio succinogenes).